The sequence spans 273 residues: Ciliary microtubule inner protein 2B (273 aa).

Disordered regions lie at residues 59–85 (TLLP…GHER) and 123–164 (RHGE…HASP). The span at 123–159 (RHGEQESHQLPDGAKGEREVEEDQLREAEEPPLKQEL) shows a compositional bias: basic and acidic residues.

The protein belongs to the CIMIP2 family. In terms of assembly, microtubule inner protein component of sperm flagellar doublet microtubules. Expressed in airway epithelial cells.

The protein localises to the cytoplasm. Its subcellular location is the cytoskeleton. It is found in the cilium axoneme. The protein resides in the flagellum axoneme. In terms of biological role, microtubule inner protein (MIP) part of the dynein-decorated doublet microtubules (DMTs) in cilia axoneme, which is required for motile cilia beating. The polypeptide is Ciliary microtubule inner protein 2B (Cimip2b) (Mus musculus (Mouse)).